A 102-amino-acid polypeptide reads, in one-letter code: Vesicle-associated membrane protein 5 (102 aa).

Residues 1-72 (MAGKELERCQ…RWENIRCRVY (72 aa)) are Cytoplasmic-facing. Positions 5 to 65 (ELERCQRQAD…KTLAQQKRWE (61 aa)) constitute a v-SNARE coiled-coil homology domain. Residues S41, S48, and S49 each carry the phosphoserine modification. Residues 73 to 93 (LGLAVAGGLLLILVVLLVIFL) form a helical; Anchor for type IV membrane protein membrane-spanning segment. The Vesicular segment spans residues 94–102 (PSGEDSSKP).

It belongs to the synaptobrevin family.

The protein localises to the cell membrane. Its subcellular location is the endomembrane system. It is found in the golgi apparatus. It localises to the trans-Golgi network membrane. Functionally, may participate in trafficking events that are associated with myogenesis, such as myoblast fusion and/or GLUT4 trafficking. The protein is Vesicle-associated membrane protein 5 (Vamp5) of Rattus norvegicus (Rat).